Reading from the N-terminus, the 79-residue chain is Acyl carrier protein 1 (79 aa).

Residues 2 to 77 (DNIEQRVKKI…QAIDYARANV (76 aa)) enclose the Carrier domain. S37 is modified (O-(pantetheine 4'-phosphoryl)serine).

Belongs to the acyl carrier protein (ACP) family. 4'-phosphopantetheine is transferred from CoA to a specific serine of apo-ACP by AcpS. This modification is essential for activity because fatty acids are bound in thioester linkage to the sulfhydryl of the prosthetic group.

It localises to the cytoplasm. The protein operates within lipid metabolism; fatty acid biosynthesis. Its function is as follows. Carrier of the growing fatty acid chain in fatty acid biosynthesis. The protein is Acyl carrier protein 1 of Ralstonia nicotianae (strain ATCC BAA-1114 / GMI1000) (Ralstonia solanacearum).